The chain runs to 538 residues: Poly [ADP-ribose] polymerase 2 (538 aa).

Residues 1 to 94 (MSIINDENGR…RDDEPVPNKY (94 aa)) form the WGR domain. A disordered region spans residues 104–133 (RQTEKEVKKEEPEPEPKVDEKNTRGRKKRG). A compositionally biased stretch (basic and acidic residues) spans 105–126 (QTEKEVKKEEPEPEPKVDEKNT). A PARP alpha-helical domain is found at 148–285 (VEEVNEKLKE…GSIEASLELK (138 aa)). Positions 309-535 (EPVSEEIAGK…VKVDRLTAKE (227 aa)) constitute a PARP catalytic domain. The segment at 357-381 (QEVPKKRGRKSTKTAAPTVPPPTTK) is disordered.

The protein belongs to the ARTD/PARP family.

It localises to the nucleus. The catalysed reaction is NAD(+) + (ADP-D-ribosyl)n-acceptor = nicotinamide + (ADP-D-ribosyl)n+1-acceptor + H(+).. It carries out the reaction L-aspartyl-[protein] + NAD(+) = 4-O-(ADP-D-ribosyl)-L-aspartyl-[protein] + nicotinamide. The enzyme catalyses L-glutamyl-[protein] + NAD(+) = 5-O-(ADP-D-ribosyl)-L-glutamyl-[protein] + nicotinamide. Inhibited by N-(6-oxo-5,6-dihydrophenanthridin-2-yl)-N,N-dimethylacetamide HCl (PJ34), 1,5-dihydroxyisoquinoline (DHQ) and 3-aminobenzamide (3AB). Its function is as follows. Poly[ADP-ribose] polymerase modifies various nuclear proteins by poly(ADP-ribosyl)ation, a post-translational modification synthesized after DNA damage that appears as an obligatory step in a detection/signaling pathway leading to the reparation of DNA strand breaks and programmed cell death. The protein is Poly [ADP-ribose] polymerase 2 of Caenorhabditis elegans.